The primary structure comprises 288 residues: Pyridoxal kinase PdxY (288 aa).

Substrate contacts are provided by residues serine 9 and 44–45; that span reads TQ. Residues aspartate 111, glutamate 148, and lysine 181 each coordinate ATP. Aspartate 224 serves as a coordination point for substrate.

It belongs to the pyridoxine kinase family. PdxY subfamily. Homodimer. The cofactor is Mg(2+).

The catalysed reaction is pyridoxal + ATP = pyridoxal 5'-phosphate + ADP + H(+). Its pathway is cofactor metabolism; pyridoxal 5'-phosphate salvage; pyridoxal 5'-phosphate from pyridoxal: step 1/1. In terms of biological role, pyridoxal kinase involved in the salvage pathway of pyridoxal 5'-phosphate (PLP). Catalyzes the phosphorylation of pyridoxal to PLP. The sequence is that of Pyridoxal kinase PdxY from Haemophilus influenzae (strain ATCC 51907 / DSM 11121 / KW20 / Rd).